The primary structure comprises 842 residues: Glucans biosynthesis glucosyltransferase H (842 aa).

Transmembrane regions (helical) follow at residues I140–L160, I194–M214, V513–L533, I568–L588, F600–V620, M622–S642, F656–L676, and F680–I700.

Belongs to the glycosyltransferase 2 family. OpgH subfamily.

The protein localises to the cell inner membrane. It participates in glycan metabolism; osmoregulated periplasmic glucan (OPG) biosynthesis. In terms of biological role, involved in the biosynthesis of osmoregulated periplasmic glucans (OPGs). The sequence is that of Glucans biosynthesis glucosyltransferase H from Klebsiella pneumoniae (strain 342).